The sequence spans 465 residues: 3-isopropylmalate dehydratase large subunit (465 aa).

[4Fe-4S] cluster contacts are provided by Cys-347, Cys-407, and Cys-410. A disordered region spans residues 417–443; sequence TLKPGERSASTSNRNFEGRQGKGGRTH.

It belongs to the aconitase/IPM isomerase family. LeuC type 1 subfamily. As to quaternary structure, heterodimer of LeuC and LeuD. [4Fe-4S] cluster serves as cofactor.

The enzyme catalyses (2R,3S)-3-isopropylmalate = (2S)-2-isopropylmalate. It participates in amino-acid biosynthesis; L-leucine biosynthesis; L-leucine from 3-methyl-2-oxobutanoate: step 2/4. Its function is as follows. Catalyzes the isomerization between 2-isopropylmalate and 3-isopropylmalate, via the formation of 2-isopropylmaleate. This Thermobifida fusca (strain YX) protein is 3-isopropylmalate dehydratase large subunit.